Reading from the N-terminus, the 644-residue chain is Threonine--tRNA ligase (644 aa).

The 61-residue stretch at M1–T61 folds into the TGS domain. Positions D243–P536 are catalytic. Zn(2+)-binding residues include C336, H387, and H513.

Belongs to the class-II aminoacyl-tRNA synthetase family. In terms of assembly, homodimer. It depends on Zn(2+) as a cofactor.

It localises to the cytoplasm. The catalysed reaction is tRNA(Thr) + L-threonine + ATP = L-threonyl-tRNA(Thr) + AMP + diphosphate + H(+). Its function is as follows. Catalyzes the attachment of threonine to tRNA(Thr) in a two-step reaction: L-threonine is first activated by ATP to form Thr-AMP and then transferred to the acceptor end of tRNA(Thr). Also edits incorrectly charged L-seryl-tRNA(Thr). The protein is Threonine--tRNA ligase of Maricaulis maris (strain MCS10) (Caulobacter maris).